We begin with the raw amino-acid sequence, 322 residues long: MTTPQEDGFLRLKIASKEKIARDIWSFELTDPQGAPLPPFEAGANLTVAVPNGSRRTYSLCNDSQERNRYVIAVKRDSNGRGGSISFIDDTSEGDAVEVSLPRNEFPLDKRAKSFILVAGGIGITPMLSMARQLRAEGLRSFRLYYLTRDPEGTAFFDELTSDEWRSDVKIHHDHGDPTKAFDFWSVFEKSKPAQHVYCCGPQALMDTVRDMTGHWPSGTVHFESFGATNTNARENTPFTVRLSRSGTSFEIPANRSILEVLRDANVRVPSSCESGTCGSCKTALCSGEADHRDMVLRDDEKGTQIMVCVSRAKSAELVLDL.

The 103-residue stretch at 7 to 109 (DGFLRLKIAS…SLPRNEFPLD (103 aa)) folds into the FAD-binding FR-type domain. FMN contacts are provided by residues 56-57 (RT), 73-75 (AVK), 81-84 (RGGS), T125, and F226. In terms of domain architecture, 2Fe-2S ferredoxin-type spans 239 to 322 (FTVRLSRSGT…AKSAELVLDL (84 aa)). C273 contacts [2Fe-2S] cluster. FMN is bound at residue S275. C278, C281, and C309 together coordinate [2Fe-2S] cluster.

The protein belongs to the PDR/VanB family. In terms of assembly, monomer. Requires FMN as cofactor.

Component of the electron transfer chain involved in pyridine nucleotide-dependent dihydroxylation of phthalate. Utilizes FMN to mediate electron transfer from the two-electron donor, NADH, to the one-electron acceptor, (2Fe-2S). The sequence is that of Phthalate dioxygenase reductase (ophA1) from Burkholderia cepacia (Pseudomonas cepacia).